Here is a 745-residue protein sequence, read N- to C-terminus: Probable endochitinase ARB_07371 (745 aa).

A signal peptide spans 1–23 (MALPKTIMAFIAFISFLVSTTFA). Residues 30-351 (TNVVTYWGQG…SNIKRLLLNN (322 aa)) form the GH18 domain. The active-site Proton donor is E178. Disordered regions lie at residues 351–372 (NDPS…SMST) and 395–446 (WSMP…TTEI). Low complexity predominate over residues 357–372 (TTTSKTMSSTKTSMST). N-linked (GlcNAc...) asparagine glycosylation is found at N438 and N484. The interval 651-715 (SEPMTPTQVP…EMGGNGGDRT (65 aa)) is disordered. A lipid anchor (GPI-anchor amidated glycine) is attached at G720. Positions 721 to 745 (GAGVVSPSFSVVVIVLGSIVYHIMQ) are cleaved as a propeptide — removed in mature form.

The protein belongs to the glycosyl hydrolase 18 family. Chitinase class III subfamily.

The protein resides in the cell membrane. It is found in the secreted. The protein localises to the cell wall. The catalysed reaction is Random endo-hydrolysis of N-acetyl-beta-D-glucosaminide (1-&gt;4)-beta-linkages in chitin and chitodextrins.. Its function is as follows. GPI-anchored chitinase involved in the degradation of chitin, a component of the cell walls of fungi and exoskeletal elements of some animals (including worms and arthropods). Required to reshape the cell wall at the sites where cell wall remodeling and/or cell wall maturation actively take place such as sites of conidia formation. This Arthroderma benhamiae (strain ATCC MYA-4681 / CBS 112371) (Trichophyton mentagrophytes) protein is Probable endochitinase ARB_07371.